We begin with the raw amino-acid sequence, 78 residues long: Large ribosomal subunit protein uL29 (78 aa).

This sequence belongs to the universal ribosomal protein uL29 family.

In Crocosphaera subtropica (strain ATCC 51142 / BH68) (Cyanothece sp. (strain ATCC 51142)), this protein is Large ribosomal subunit protein uL29.